A 383-amino-acid polypeptide reads, in one-letter code: Insulinoma-associated protein 1a (383 aa).

Positions 1–20 are SNAG domain; that stretch reads MPRGFLVKRNKKATPVSYRV. Disordered stretches follow at residues 99 to 141 and 229 to 269; these read PVDL…AMRK and RWHK…SEDG. Positions 105-120 are enriched in polar residues; that stretch reads GTSNSNRTGTTVTTKR. Residues 130 to 140 are compositionally biased toward basic residues; it reads KPASKKAKAMR. The segment at 209 to 231 adopts a C2H2-type 1 zinc-finger fold; the sequence is YRCPECDKLFSCPANLASHRRWH. A compositionally biased stretch (basic and acidic residues) spans 244–256; the sequence is APEKEETSSDRDT. The C2H2-type 2; degenerate zinc finger occupies 271–295; that stretch reads YDCQHCGKKFKRQAYLKKHVTAHHD. 2 C2H2-type zinc fingers span residues 314–337 and 342–365; these read HLCP…RLQH and YPCK…NKCH.

It belongs to the INSM1 family.

The protein resides in the nucleus. Its function is as follows. May act as a transcriptional regulator. May play a role in neurogenesis and neuroendocrine cell differentiation during embryonic development. This is Insulinoma-associated protein 1a (insm1a) from Danio rerio (Zebrafish).